The chain runs to 440 residues: Serine hydroxymethyltransferase (440 aa).

123 to 125 (GHI) lines the (6S)-5,6,7,8-tetrahydrofolate pocket. Residue lysine 238 is modified to N6-(pyridoxal phosphate)lysine.

This sequence belongs to the SHMT family. As to quaternary structure, homodimer. It depends on pyridoxal 5'-phosphate as a cofactor.

The protein localises to the cytoplasm. It participates in amino-acid biosynthesis; glycine biosynthesis; glycine from L-serine: step 1/1. In terms of biological role, catalyzes the reversible interconversion of serine and glycine with a modified folate serving as the one-carbon carrier. Also exhibits a pteridine-independent aldolase activity toward beta-hydroxyamino acids, producing glycine and aldehydes, via a retro-aldol mechanism. This Nitrosopumilus maritimus (strain SCM1) protein is Serine hydroxymethyltransferase.